The following is a 568-amino-acid chain: Proline--tRNA ligase (568 aa).

The protein belongs to the class-II aminoacyl-tRNA synthetase family. ProS type 1 subfamily. As to quaternary structure, homodimer.

The protein localises to the cytoplasm. The enzyme catalyses tRNA(Pro) + L-proline + ATP = L-prolyl-tRNA(Pro) + AMP + diphosphate. Its function is as follows. Catalyzes the attachment of proline to tRNA(Pro) in a two-step reaction: proline is first activated by ATP to form Pro-AMP and then transferred to the acceptor end of tRNA(Pro). As ProRS can inadvertently accommodate and process non-cognate amino acids such as alanine and cysteine, to avoid such errors it has two additional distinct editing activities against alanine. One activity is designated as 'pretransfer' editing and involves the tRNA(Pro)-independent hydrolysis of activated Ala-AMP. The other activity is designated 'posttransfer' editing and involves deacylation of mischarged Ala-tRNA(Pro). The misacylated Cys-tRNA(Pro) is not edited by ProRS. In Listeria monocytogenes serotype 4b (strain F2365), this protein is Proline--tRNA ligase.